The chain runs to 661 residues: Translation factor GUF1 homolog, mitochondrial (661 aa).

A tr-type G domain is found at 59-242 (ENIRNFCIVA…AIIDRIPSPK (184 aa)). GTP is bound by residues 68–75 (AHVDHGKS), 135–139 (DTPGH), and 189–192 (NKVD).

This sequence belongs to the TRAFAC class translation factor GTPase superfamily. Classic translation factor GTPase family. LepA subfamily.

The protein localises to the mitochondrion inner membrane. The catalysed reaction is GTP + H2O = GDP + phosphate + H(+). In terms of biological role, promotes mitochondrial protein synthesis. May act as a fidelity factor of the translation reaction, by catalyzing a one-codon backward translocation of tRNAs on improperly translocated ribosomes. Binds to mitochondrial ribosomes in a GTP-dependent manner. This chain is Translation factor GUF1 homolog, mitochondrial, found in Ixodes scapularis (Black-legged tick).